We begin with the raw amino-acid sequence, 265 residues long: Putative pyruvate, phosphate dikinase regulatory protein 2 (265 aa).

150–157 (GVSRTSKT) contacts ADP.

The protein belongs to the pyruvate, phosphate/water dikinase regulatory protein family. PDRP subfamily.

It catalyses the reaction N(tele)-phospho-L-histidyl/L-threonyl-[pyruvate, phosphate dikinase] + ADP = N(tele)-phospho-L-histidyl/O-phospho-L-threonyl-[pyruvate, phosphate dikinase] + AMP + H(+). It carries out the reaction N(tele)-phospho-L-histidyl/O-phospho-L-threonyl-[pyruvate, phosphate dikinase] + phosphate + H(+) = N(tele)-phospho-L-histidyl/L-threonyl-[pyruvate, phosphate dikinase] + diphosphate. Functionally, bifunctional serine/threonine kinase and phosphorylase involved in the regulation of the pyruvate, phosphate dikinase (PPDK) by catalyzing its phosphorylation/dephosphorylation. This Latilactobacillus sakei subsp. sakei (strain 23K) (Lactobacillus sakei subsp. sakei) protein is Putative pyruvate, phosphate dikinase regulatory protein 2.